Reading from the N-terminus, the 478-residue chain is POU domain, class 2, transcription factor 2 (478 aa).

5 disordered regions span residues 1–82 (MVHS…PPQA), 167–199 (QAVT…EASD), 275–298 (SSLP…GRRR), 357–391 (PCSA…PLSQ), and 409–478 (TLHP…PYQP). Basic and acidic residues predominate over residues 12–37 (RMSKPLEAEKQGLDSPSEHTDTERNG). Residues 38 to 60 (PDTNHQNPQNKTSPFSVSPTGPS) are compositionally biased toward polar residues. Residues 195–269 (EEASDLEELE…LLEKWLNDAE (75 aa)) form the POU-specific domain. Residues 275 to 285 (SSLPSPNQLSR) show a composition bias toward polar residues. The segment at residues 297-356 (RRKKRTSIETNVRFALEKSFLANQKPTSEEILLIAEQLHMEKEVIRVWFCNRRQKEKRIN) is a DNA-binding region (homeobox). The interval 389-410 (LSQASSSLSTTVTTLSSAVGTL) is leucine-zipper. Residues 416-425 (AGGGAAGGGA) show a composition bias toward gly residues.

Belongs to the POU transcription factor family. Class-2 subfamily. Interacts with NR3C1, AR and PGR. Interacts with POU2AF1; the interaction increases POU2F2 transactivation activity. Predominantly expressed in B-cells.

It is found in the nucleus. With respect to regulation, transactivation activity is enhanced by transcriptional coactivator POU2AF1. In terms of biological role, transcription factor that specifically binds to the octamer motif (5'-ATTTGCAT-3'). Regulates IL6 expression in B cells with POU2AF1. Regulates transcription in a number of tissues in addition to activating immunoglobulin gene expression. Modulates transcription transactivation by NR3C1, AR and PGR. This chain is POU domain, class 2, transcription factor 2 (POU2F2), found in Sus scrofa (Pig).